We begin with the raw amino-acid sequence, 122 residues long: Large ribosomal subunit protein uL14 (122 aa).

This sequence belongs to the universal ribosomal protein uL14 family. In terms of assembly, part of the 50S ribosomal subunit. Forms a cluster with proteins L3 and L19. In the 70S ribosome, L14 and L19 interact and together make contacts with the 16S rRNA in bridges B5 and B8.

In terms of biological role, binds to 23S rRNA. Forms part of two intersubunit bridges in the 70S ribosome. This is Large ribosomal subunit protein uL14 from Elusimicrobium minutum (strain Pei191).